The sequence spans 592 residues: Membrane protein insertase YidC (592 aa).

Helical transmembrane passes span 8 to 28 (LFIA…FVMG), 363 to 385 (ALGQ…MFPL), 430 to 450 (INPL…FALY), 493 to 513 (IWLI…GLTM), and 531 to 551 (IFAF…AGLV).

It belongs to the OXA1/ALB3/YidC family. Type 1 subfamily. In terms of assembly, interacts with the Sec translocase complex via SecD. Specifically interacts with transmembrane segments of nascent integral membrane proteins during membrane integration.

The protein localises to the cell inner membrane. In terms of biological role, required for the insertion and/or proper folding and/or complex formation of integral membrane proteins into the membrane. Involved in integration of membrane proteins that insert both dependently and independently of the Sec translocase complex, as well as at least some lipoproteins. Aids folding of multispanning membrane proteins. This Maricaulis maris (strain MCS10) (Caulobacter maris) protein is Membrane protein insertase YidC.